A 293-amino-acid polypeptide reads, in one-letter code: Ribosomal protein L11 methyltransferase (293 aa).

Residues threonine 145, glycine 166, aspartate 188, and asparagine 230 each coordinate S-adenosyl-L-methionine.

It belongs to the methyltransferase superfamily. PrmA family.

The protein resides in the cytoplasm. It catalyses the reaction L-lysyl-[protein] + 3 S-adenosyl-L-methionine = N(6),N(6),N(6)-trimethyl-L-lysyl-[protein] + 3 S-adenosyl-L-homocysteine + 3 H(+). In terms of biological role, methylates ribosomal protein L11. The sequence is that of Ribosomal protein L11 methyltransferase from Shewanella pealeana (strain ATCC 700345 / ANG-SQ1).